Consider the following 504-residue polypeptide: MSTKLILSFSLCLMVLSCSAQLWPWQKGQGSRPHHGRQQHQFQHQCDIQRLTASEPSRRVRSEAGVTEIWDHDTPEFRCTGFVAVRVVIQPGGLLLPSYSNAPYITFVEQGRGVQGVVIPGCPETFQSDSEFEYPQSQRGRHSRQSESEEESSRGDQHQKIFRIREGDVIPSPAGVVQWTHNDGNDDLISVTLLDANSYHKQLDENVRSFFLAGQSQRETREEGSDRQSRESDDDEALLGANILSGFQDEILHELFRDVDRETISKLRGENDQRGFIVQAQDLKLRVPQDFEEEYERERGDRRRGQGGSGRSNGVEQGFCNLKFRRNFNTPTNTYVFNPRAGRINTVNSNSLPILEFLQLSAQHVVLYKNAIIGPRWNLNAHSALYVTRGEGRVQVVGDEGKSVFDDKVQRGQILVVPQGFAVVLKAGREGLEWVELKNSGNAITSPIGGRTSVLRAIPVEVLANSYDISTKEAYKLKNGRQEVEVFRPFQSRDEKERERFSIV.

The signal sequence occupies residues 1 to 20; it reads MSTKLILSFSLCLMVLSCSA. Intrachain disulfides connect C46–C79 and C122–C320. In terms of domain architecture, Cupin type-1 1 spans 51-265; that stretch reads LTASEPSRRV…FRDVDRETIS (215 aa). Disordered regions lie at residues 128 to 158, 214 to 237, and 289 to 314; these read SDSE…GDQH, GQSQ…DDEA, and QDFE…RSNG. Basic and acidic residues-rich tracts occupy residues 144–158 and 218–231; these read RQSE…GDQH and RETR…QSRE. Residues 326-475 form the Cupin type-1 2 domain; that stretch reads RNFNTPTNTY…SYDISTKEAY (150 aa).

The protein belongs to the 11S seed storage protein (globulins) family. In terms of assembly, hexamer; each subunit is composed of an acidic and a basic chain derived from a single precursor and linked by a disulfide bond.

In terms of biological role, seed storage protein. This chain is 13S globulin seed storage protein 2 (FA18), found in Fagopyrum esculentum (Common buckwheat).